Reading from the N-terminus, the 130-residue chain is Small ribosomal subunit protein uS11 (130 aa).

The segment at 1 to 21 (MAPQSKRSGGRKQKKHVPNGV) is disordered. Basic residues predominate over residues 8 to 17 (SGGRKQKKHV).

It belongs to the universal ribosomal protein uS11 family. Part of the 30S ribosomal subunit. Interacts with proteins S7 and S18. Binds to IF-3.

Located on the platform of the 30S subunit, it bridges several disparate RNA helices of the 16S rRNA. Forms part of the Shine-Dalgarno cleft in the 70S ribosome. This chain is Small ribosomal subunit protein uS11, found in Acaryochloris marina (strain MBIC 11017).